The chain runs to 731 residues: Gelsolin (731 aa).

Positions 2-125 (VVEHPEFLKA…YKKGGVASGF (124 aa)) are actin-severing. A Gelsolin-like 1 repeat occupies 25–107 (FDLVPVPPNL…VQGFESATFL (83 aa)). Tyr35 is subject to Phosphotyrosine. The Ca(2+) site is built by Gly41, Asp42, Glu73, Asp85, Gly90, and Ala92. The segment at 72 to 75 (DESG) is actin-actin interfilament contact point. An a 1,2-diacyl-sn-glycero-3-phospho-(1D-myo-inositol-4,5-bisphosphate)-binding site is contributed by 111–118 (KSGLKYKK). Residue Val121 coordinates Ca(2+). Residue 137–145 (RLFQVKGRR) participates in a 1,2-diacyl-sn-glycero-3-phospho-(1D-myo-inositol-4,5-bisphosphate) binding. One copy of the Gelsolin-like 2 repeat lies at 147 to 219 (VRATEVPVSW…SEEGAEPEAM (73 aa)). The Ca(2+) site is built by Gly162 and Asp163. The cysteines at positions 164 and 177 are disulfide-linked. Glu185 provides a ligand contact to Ca(2+). Over residues 197-211 (RDNERSGRARVHVSE) the composition is skewed to basic and acidic residues. Residues 197–216 (RDNERSGRARVHVSEEGAEP) are disordered. Ca(2+) contacts are provided by Asp235, Glu278, Asp279, and Glu303. The stretch at 266 to 338 (DENPFAQGAL…LPEGGETPLF (73 aa)) is one Gelsolin-like 3 repeat. Phosphotyrosine occurs at positions 358 and 414. The tract at residues 383-731 (AAQHGMDDDG…LDRALAELAA (349 aa)) is actin-binding, Ca-sensitive. The Gelsolin-like 4 repeat unit spans residues 404–485 (SDKVPVDPAT…VQGKEPAHLM (82 aa)). The Ca(2+) site is built by Gly420, Asp421, Glu451, Asp463, Gly468, Pro470, and Thr500. Residues 527-591 (AVEVMPKAGA…AEGSEPDSFW (65 aa)) form a Gelsolin-like 5 repeat. At Lys533 the chain carries N6-acetyllysine. The Ca(2+) site is built by Asn540 and Asp541. Residue Tyr552 is modified to Phosphotyrosine. Ca(2+) is bound at residue Glu563. Residue Tyr600 is modified to Phosphotyrosine. One copy of the Gelsolin-like 6 repeat lies at 630-705 (IEEVPGELMQ…VKQGFEPPSF (76 aa)). Residues Asp645, Asp646, and Glu668 each coordinate Ca(2+). The residue at position 691 (Thr691) is a Phosphothreonine.

Belongs to the villin/gelsolin family. As to quaternary structure, binds to actin and to fibronectin. Identified in a complex composed of ACTA1, COBL, GSN and TMSB4X. Interacts with the inactive form of EIF2AK2/PKR. Interacts with FLII.

It localises to the cytoplasm. The protein localises to the cytoskeleton. Its function is as follows. Calcium-regulated, actin-modulating protein that binds to the plus (or barbed) ends of actin monomers or filaments, preventing monomer exchange (end-blocking or capping). It can promote the assembly of monomers into filaments (nucleation) as well as sever filaments already formed. Plays a role in ciliogenesis. The sequence is that of Gelsolin (GSN) from Bos taurus (Bovine).